The following is a 174-amino-acid chain: Inosine/xanthosine triphosphatase (174 aa).

Residue D68 coordinates Mg(2+). Position 68-69 (68-69 (DA)) interacts with substrate.

It belongs to the YjjX NTPase family. In terms of assembly, homodimer. Mg(2+) serves as cofactor. The cofactor is Mn(2+).

It catalyses the reaction XTP + H2O = XDP + phosphate + H(+). The enzyme catalyses ITP + H2O = IDP + phosphate + H(+). In terms of biological role, phosphatase that hydrolyzes non-canonical purine nucleotides such as XTP and ITP to their respective diphosphate derivatives. Probably excludes non-canonical purines from DNA/RNA precursor pool, thus preventing their incorporation into DNA/RNA and avoiding chromosomal lesions. The chain is Inosine/xanthosine triphosphatase from Photobacterium profundum (strain SS9).